We begin with the raw amino-acid sequence, 341 residues long: D-erythrose-4-phosphate dehydrogenase (341 aa).

Position 12-13 (R12–I13) interacts with NAD(+). Substrate-binding positions include S154–T156, R200, T213–K214, and R236. C155 (nucleophile) is an active-site residue. N318 is an NAD(+) binding site.

This sequence belongs to the glyceraldehyde-3-phosphate dehydrogenase family. Epd subfamily. In terms of assembly, homotetramer.

The protein resides in the cytoplasm. The catalysed reaction is D-erythrose 4-phosphate + NAD(+) + H2O = 4-phospho-D-erythronate + NADH + 2 H(+). Its pathway is cofactor biosynthesis; pyridoxine 5'-phosphate biosynthesis; pyridoxine 5'-phosphate from D-erythrose 4-phosphate: step 1/5. Catalyzes the NAD-dependent conversion of D-erythrose 4-phosphate to 4-phosphoerythronate. In Edwardsiella ictaluri (strain 93-146), this protein is D-erythrose-4-phosphate dehydrogenase.